A 174-amino-acid chain; its full sequence is Nascent polypeptide-associated complex subunit alpha (174 aa).

N-acetylserine is present on Ser2. The 65-residue stretch at 14–78 (NKNEKKAREL…AKVDNFTQKL (65 aa)) folds into the NAC-A/B domain. Positions 85-137 (AQASGIMPSNEDVATKSPEDIQADMQAAAEGSVNAAAEEDDEEGEVDAGDLNK) are disordered. Ser93 carries the post-translational modification Phosphoserine. The span at 111-120 (AAAEGSVNAA) shows a compositional bias: low complexity. Residues 121 to 132 (AEEDDEEGEVDA) are compositionally biased toward acidic residues. A UBA domain is found at 135–174 (LNKDDIELVVQQTNVSKNQAIKALKAHNGDLVNAIMSLSK).

This sequence belongs to the NAC-alpha family. In terms of assembly, part of the nascent polypeptide-associated complex (NAC), consisting of EGD2 and either EGD1 or BTT1. NAC associates with ribosomes via EGD1 or BTT1, and with the CCR4-NOT complex.

It localises to the cytoplasm. Its subcellular location is the nucleus. Functionally, component of the nascent polypeptide-associated complex (NAC), a dynamic component of the ribosomal exit tunnel, protecting the emerging polypeptides from interaction with other cytoplasmic proteins to ensure appropriate nascent protein targeting. The NAC complex also promotes mitochondrial protein import by enhancing productive ribosome interactions with the outer mitochondrial membrane and blocks the inappropriate interaction of ribosomes translating non-secretory nascent polypeptides with translocation sites in the membrane of the endoplasmic reticulum. EGD2 may also be involved in transcription regulation. This Saccharomyces cerevisiae (strain YJM789) (Baker's yeast) protein is Nascent polypeptide-associated complex subunit alpha (EGD2).